A 69-amino-acid chain; its full sequence is Metallothionein-like protein CRS5 (69 aa).

This sequence belongs to the metallothionein superfamily. Type 13 family.

Functionally, critical role in copper (specific) homeostasis and detoxification. May protect by directly chelating and sequestering copper ions. The protein is Metallothionein-like protein CRS5 (CRS5) of Saccharomyces cerevisiae (strain RM11-1a) (Baker's yeast).